The following is a 206-amino-acid chain: Holliday junction branch migration complex subunit RuvA (206 aa).

A domain I region spans residues 1–64 (MIGKLKGTVD…EDQIRLFGFV (64 aa)). A domain II region spans residues 65-143 (TEAEREWFRL…AFTAADPGLA (79 aa)). A flexible linker region spans residues 144 to 154 (RLAADVEATEA). The segment at 154–206 (AAGGALADAVSALVNLGYGQAQAHTAIAAAGRKAGEDATTETLIRLGLKELAK) is domain III.

Belongs to the RuvA family. As to quaternary structure, homotetramer. Forms an RuvA(8)-RuvB(12)-Holliday junction (HJ) complex. HJ DNA is sandwiched between 2 RuvA tetramers; dsDNA enters through RuvA and exits via RuvB. An RuvB hexamer assembles on each DNA strand where it exits the tetramer. Each RuvB hexamer is contacted by two RuvA subunits (via domain III) on 2 adjacent RuvB subunits; this complex drives branch migration. In the full resolvosome a probable DNA-RuvA(4)-RuvB(12)-RuvC(2) complex forms which resolves the HJ.

The protein localises to the cytoplasm. The RuvA-RuvB-RuvC complex processes Holliday junction (HJ) DNA during genetic recombination and DNA repair, while the RuvA-RuvB complex plays an important role in the rescue of blocked DNA replication forks via replication fork reversal (RFR). RuvA specifically binds to HJ cruciform DNA, conferring on it an open structure. The RuvB hexamer acts as an ATP-dependent pump, pulling dsDNA into and through the RuvAB complex. HJ branch migration allows RuvC to scan DNA until it finds its consensus sequence, where it cleaves and resolves the cruciform DNA. In Azorhizobium caulinodans (strain ATCC 43989 / DSM 5975 / JCM 20966 / LMG 6465 / NBRC 14845 / NCIMB 13405 / ORS 571), this protein is Holliday junction branch migration complex subunit RuvA.